The following is a 376-amino-acid chain: Small RNA 2'-O-methyltransferase (376 aa).

The S-adenosyl-L-methionine site is built by T49, D67, and S103. Residues E121, E124, H125, and H171 each contribute to the Mg(2+) site.

The protein belongs to the methyltransferase superfamily. HEN1 family. Mg(2+) serves as cofactor.

The protein resides in the cytoplasm. The enzyme catalyses small RNA 3'-end nucleotide + S-adenosyl-L-methionine = small RNA 3'-end 2'-O-methylnucleotide + S-adenosyl-L-homocysteine + H(+). Methyltransferase that adds a 2'-O-methyl group at the 3'-end of piRNAs, a class of 24 to 30 nucleotide RNAs that are generated by a Dicer-independent mechanism and are primarily derived from transposons and other repeated sequence elements. This probably protects the 3'-end of piRNAs from uridylation activity and subsequent degradation. Stabilization of piRNAs is essential for gametogenesis. The chain is Small RNA 2'-O-methyltransferase (HENMT1) from Gallus gallus (Chicken).